Here is a 597-residue protein sequence, read N- to C-terminus: Centrosomal protein of 70 kDa (597 aa).

Residues 1-24 (MFPVAPKPQDSNQPSDRLMTEKQQ) form a disordered region. Coiled coils occupy residues 66 to 179 (MRQN…QTEV) and 254 to 320 (TYKG…QELI). One copy of the TPR repeat lies at 483 to 516 (NGVYPRMNEVYTRLGEMNNAVRNLQELLELDSSS).

Directly interacts with tubulin-gamma; this interaction determines centrosomal localization.

The protein localises to the cytoplasm. It localises to the cytoskeleton. Its subcellular location is the microtubule organizing center. The protein resides in the centrosome. Functionally, plays a role in the organization of both preexisting and nascent microtubules in interphase cells. During mitosis, required for the organization and orientation of the mitotic spindle. The protein is Centrosomal protein of 70 kDa (CEP70) of Macaca fascicularis (Crab-eating macaque).